Reading from the N-terminus, the 1075-residue chain is Ataxin-2-like protein (1075 aa).

N-acetylmethionine is present on Met-1. The span at 1–12 (MLKPQPLQQPSQ) shows a compositional bias: low complexity. The interval 1 to 115 (MLKPQPLQQP…KGPPQSPVFE (115 aa)) is disordered. The segment at 98 to 121 (SARGQSTGKGPPQSPVFEGVYNNS) is interaction with MPL. Residues Ser-103 and Ser-111 each carry the phosphoserine modification. At Tyr-118 the chain carries Phosphotyrosine. The region spanning 122 to 199 (RMLHFLTAVV…VMLVHFRNVD (78 aa)) is the Sm domain. An N6-acetyllysine modification is found at Lys-207. Residue Ser-238 is modified to Phosphoserine. Phosphotyrosine is present on Tyr-264. At Ser-306 the chain carries Phosphoserine. Tyr-309 carries the post-translational modification Phosphotyrosine. The segment covering 316 to 328 (ENDDGRTEEEKHS) has biased composition (basic and acidic residues). Disordered stretches follow at residues 316–521 (ENDD…LEPQ), 551–697 (QFKL…SIPV), 733–770 (VSNS…MMQA), 820–849 (SNPR…EQPT), 865–940 (ATQL…SSFP), and 1022–1045 (PYIG…ADDR). Polar residues predominate over residues 330-342 (VQRQGSGRESPSL). A phosphoserine mark is found at Ser-335 and Ser-339. Lys-348 is covalently cross-linked (Glycyl lysine isopeptide (Lys-Gly) (interchain with G-Cter in SUMO2)). Position 349 is a phosphotyrosine (Tyr-349). Arg-361 is modified (asymmetric dimethylarginine). Positions 363–380 (GVRCSSSRGGRPGLSSLP) are enriched in low complexity. Ser-391 and Ser-409 each carry phosphoserine. Residues 421–433 (TLSSPSNRPSGET) are compositionally biased toward polar residues. The residue at position 449 (Ser-449) is a Phosphoserine. 2 stretches are compositionally biased toward low complexity: residues 450–462 (PKSA…SASC) and 471–485 (VPTS…SSVS). A phosphoserine mark is found at Ser-493 and Ser-496. Over residues 505–516 (DVKELSTKEPGR) the composition is skewed to basic and acidic residues. A phosphoserine mark is found at Ser-557, Ser-558, Ser-559, and Ser-563. The segment covering 571 to 584 (ILKEEPKGKEKEVD) has biased composition (basic and acidic residues). Ser-594 carries the post-translational modification Phosphoserine. Thr-632 carries the phosphothreonine modification. Residues Ser-634, Ser-674, Ser-680, and Ser-684 each carry the phosphoserine modification. Composition is skewed to low complexity over residues 678 to 694 (STST…STPS) and 761 to 770 (PASAPPMMQA). Over residues 874–898 (QPATTPTGSQPQSQHAAPSPVQHQA) the composition is skewed to polar residues. Composition is skewed to low complexity over residues 931–940 (SAQSPQSSFP) and 1025–1037 (GHPQ…QAPG).

This sequence belongs to the ataxin-2 family. In terms of assembly, interacts with MPL/TPOR and EPOR and dissociates after ligand stimulation. Interacts with DDX6, G3BP1, and ATXN2. Interacts with PRMT1. Interacts with CIC and ATXN1. In terms of processing, thrombopoietin triggers the phosphorylation on tyrosine residues in a way that is dependent on MPL C-terminal domain. Asymmetrically dimethylated. Probably methylated by PRMT1. Expressed at high levels in thymus, lymph node, spleen, fetal kidney and adult testis. Constitutively associated with MPL and EPOR in hematopoietic cells.

The protein localises to the membrane. It localises to the cytoplasm. It is found in the nucleus speckle. Its subcellular location is the cytoplasmic granule. In terms of biological role, involved in the regulation of stress granule and P-body formation. This chain is Ataxin-2-like protein (ATXN2L), found in Homo sapiens (Human).